The following is a 207-amino-acid chain: BTB/POZ domain-containing protein At1g01640 (207 aa).

Residues 24-94 (TDVLVKPGEE…LYSGNLKAPY (71 aa)) enclose the BTB domain.

As to quaternary structure, interacts with CUL3A.

It participates in protein modification; protein ubiquitination. Functionally, may act as a substrate-specific adapter of an E3 ubiquitin-protein ligase complex (CUL3-RBX1-BTB) which mediates the ubiquitination and subsequent proteasomal degradation of target proteins. The chain is BTB/POZ domain-containing protein At1g01640 from Arabidopsis thaliana (Mouse-ear cress).